We begin with the raw amino-acid sequence, 387 residues long: Putative 8-amino-7-oxononanoate synthase (387 aa).

Position 19 (Arg19) interacts with substrate. 107–108 (GY) is a binding site for pyridoxal 5'-phosphate. Position 132 (His132) interacts with substrate. Pyridoxal 5'-phosphate is bound by residues Ser180, 206–209 (DEAH), and 237–240 (TFGK). At Lys240 the chain carries N6-(pyridoxal phosphate)lysine. Thr354 lines the substrate pocket.

Belongs to the class-II pyridoxal-phosphate-dependent aminotransferase family. BioF subfamily. In terms of assembly, homodimer. Pyridoxal 5'-phosphate is required as a cofactor.

The enzyme catalyses 6-carboxyhexanoyl-[ACP] + L-alanine + H(+) = (8S)-8-amino-7-oxononanoate + holo-[ACP] + CO2. Its pathway is cofactor biosynthesis; biotin biosynthesis. Functionally, catalyzes the decarboxylative condensation of pimeloyl-[acyl-carrier protein] and L-alanine to produce 8-amino-7-oxononanoate (AON), [acyl-carrier protein], and carbon dioxide. This is Putative 8-amino-7-oxononanoate synthase (bioF) from Pasteurella multocida (strain Pm70).